The chain runs to 197 residues: MYB-like transcription factor EOBII (197 aa).

2 consecutive HTH myb-type domains span residues 10 to 62 (DAEV…LNYL) and 63 to 117 (RPDV…QKHI). DNA-binding regions (H-T-H motif) lie at residues 38–62 (WNSL…LNYL) and 90–113 (WSKI…RTRI). The tract at residues 125–158 (GQAASSEQNDHQEACTSQMSNGPNDNTIDQTYSP) is disordered. Over residues 138–158 (ACTSQMSNGPNDNTIDQTYSP) the composition is skewed to polar residues.

In terms of tissue distribution, specifically expressed in flowers, mostly in stigmas, petal tubes and petal limbs, and, to a lower extent, in anthers and stamen. Also present at low levels in roots, stems, leaves and sepals.

It is found in the nucleus. Its function is as follows. MYB-type transcription factor controlling the production of volatile organic compounds (VOCs), including floral volatile benzenoids and phenylpropanoids (FVBP), in flowers of fragrant cultivars (e.g. cv. Mitchell and cv. V26) by regulating the expression of ODO1 and EOBI, key regulators of the shikimate pathway, and of several biosynthetic floral scent-related genes including IGS, PAL2 and CFAT. This scent, mostly produced in the evening and night by the petals, attracts the pollinators (e.g. the night-active hawkmoth pollinator Manduca sexta). Binds to and activates the ODO1 and EOBI promoters via MYB binding sites (MBS) 5'-AAACCTAAT-3' and 5'-CTAACT-3'. Regulates the promoters of IGS1, CFAT and PAL2. Controls flowers petal opening by modulating a global transcriptomic switch. The polypeptide is MYB-like transcription factor EOBII (Petunia hybrida (Petunia)).